We begin with the raw amino-acid sequence, 235 residues long: Small ribosomal subunit protein uS3 (235 aa).

In terms of domain architecture, KH type-2 spans 39–107 (VRQFLNKELA…PAQINIAEVK (69 aa)). The disordered stretch occupies residues 216-235 (QPEQQPTDKPKKVPRGKGRK).

Belongs to the universal ribosomal protein uS3 family. In terms of assembly, part of the 30S ribosomal subunit. Forms a tight complex with proteins S10 and S14.

Binds the lower part of the 30S subunit head. Binds mRNA in the 70S ribosome, positioning it for translation. The sequence is that of Small ribosomal subunit protein uS3 from Aggregatibacter actinomycetemcomitans (Actinobacillus actinomycetemcomitans).